Here is a 288-residue protein sequence, read N- to C-terminus: Bifunctional protein FolD (288 aa).

Residues 164-166 and valine 230 contribute to the NADP(+) site; that span reads GRS.

This sequence belongs to the tetrahydrofolate dehydrogenase/cyclohydrolase family. In terms of assembly, homodimer.

The enzyme catalyses (6R)-5,10-methylene-5,6,7,8-tetrahydrofolate + NADP(+) = (6R)-5,10-methenyltetrahydrofolate + NADPH. It catalyses the reaction (6R)-5,10-methenyltetrahydrofolate + H2O = (6R)-10-formyltetrahydrofolate + H(+). It functions in the pathway one-carbon metabolism; tetrahydrofolate interconversion. In terms of biological role, catalyzes the oxidation of 5,10-methylenetetrahydrofolate to 5,10-methenyltetrahydrofolate and then the hydrolysis of 5,10-methenyltetrahydrofolate to 10-formyltetrahydrofolate. The chain is Bifunctional protein FolD from Thermomicrobium roseum (strain ATCC 27502 / DSM 5159 / P-2).